A 161-amino-acid chain; its full sequence is Peptidyl-prolyl cis-trans isomerase-like 3 (161 aa).

The residue at position 2 (serine 2) is an N-acetylserine. The region spanning 2-154 is the PPIase cyclophilin-type domain; the sequence is SVTLHTDVGD…NDVHIKDITI (153 aa). The residue at position 61 (arginine 61) is an Omega-N-methylarginine.

The protein belongs to the cyclophilin-type PPIase family. PPIL3 subfamily. As to quaternary structure, identified in the spliceosome C complex.

It carries out the reaction [protein]-peptidylproline (omega=180) = [protein]-peptidylproline (omega=0). PPIases accelerate the folding of proteins. It catalyzes the cis-trans isomerization of proline imidic peptide bonds in oligopeptides. May be involved in pre-mRNA splicing. The chain is Peptidyl-prolyl cis-trans isomerase-like 3 (Ppil3) from Mus musculus (Mouse).